Reading from the N-terminus, the 410-residue chain is S-adenosylmethionine synthase (410 aa).

His-21 contributes to the ATP binding site. Asp-23 provides a ligand contact to Mg(2+). Glu-49 contacts K(+). L-methionine contacts are provided by Glu-62 and Gln-105. The flexible loop stretch occupies residues 105-115 (QSQEIGAGVDQ). Residues 107–133 (QEIGAGVDQSHEVRSGENTDADDQAGA) form a disordered region. ATP is bound by residues 180 to 182 (DGK), Asp-261, 267 to 268 (RK), Ala-284, and Lys-288. L-methionine is bound at residue Asp-261. Residue Lys-292 coordinates L-methionine.

Belongs to the AdoMet synthase family. In terms of assembly, homotetramer; dimer of dimers. The cofactor is Mg(2+). K(+) is required as a cofactor.

It is found in the cytoplasm. The enzyme catalyses L-methionine + ATP + H2O = S-adenosyl-L-methionine + phosphate + diphosphate. It functions in the pathway amino-acid biosynthesis; S-adenosyl-L-methionine biosynthesis; S-adenosyl-L-methionine from L-methionine: step 1/1. Catalyzes the formation of S-adenosylmethionine (AdoMet) from methionine and ATP. The overall synthetic reaction is composed of two sequential steps, AdoMet formation and the subsequent tripolyphosphate hydrolysis which occurs prior to release of AdoMet from the enzyme. This chain is S-adenosylmethionine synthase, found in Corynebacterium diphtheriae (strain ATCC 700971 / NCTC 13129 / Biotype gravis).